The sequence spans 184 residues: Rubrerythrin-2 (184 aa).

The 145-residue stretch at S2–K146 folds into the Ferritin-like diiron domain. Fe(3+) is bound by residues E19, E52, E94, E97, E128, H131, C156, C159, C171, and C174. The Rubredoxin-like domain maps to G151 to F184.

Requires Fe(3+) as cofactor.

It catalyses the reaction H2O2 + NADH + H(+) = NAD(+) + 2 H2O. With respect to regulation, rubredoxin (Rd) increases the NADH consumption rate by serving as an intermediary electron-transfer shuttle between NROR and Rbr2. Functions as the terminal component of an NADH peroxidase (NADH:H(2)O(2) oxidoreductase) when using NADH:rubredoxin oxidoreductase (NROR) as the electron transport intermediary from NADH to Rbr2. The sequence is that of Rubrerythrin-2 (rbr2) from Clostridium acetobutylicum (strain ATCC 824 / DSM 792 / JCM 1419 / IAM 19013 / LMG 5710 / NBRC 13948 / NRRL B-527 / VKM B-1787 / 2291 / W).